Reading from the N-terminus, the 238-residue chain is Inactive glycoside hydrolase XLP1 (238 aa).

Residues 1-19 (MKSFLIAIVIAVLLPVSAA) form the signal peptide. Glutamate 133 is an active-site residue. Asparagine 171 and asparagine 187 each carry an N-linked (GlcNAc...) asparagine glycan. Glutamate 219 is an active-site residue.

This sequence belongs to the glycosyl hydrolase 12 (cellulase H) family. Interacts with host apoplastic glucanase inhibitor GIP2.

It is found in the secreted. Functionally, non-functional secreted XEG1-like protein that binds to host Nicotiana benthamiana apoplastic glucanase inhibitor protein GIP2 more tightly than does XEG1, thus it outcompetes XEG1 for GIP2 binding and frees functional XEG1 to support P.parasitica infection. With XEG1, is required to elevate apoplastic sugar during P.parasitica infection. This Phytophthora nicotianae (strain INRA-310) (Phytophthora parasitica) protein is Inactive glycoside hydrolase XLP1.